A 386-amino-acid polypeptide reads, in one-letter code: Flap endonuclease 1 (386 aa).

The interval 1–104 is N-domain; it reads MGILGLSKLI…GELAKRAERR (104 aa). Position 34 (Asp34) interacts with Mg(2+). 2 residues coordinate DNA: Arg47 and Arg70. Mg(2+) contacts are provided by Asp86, Glu158, Glu160, Asp179, and Asp181. The I-domain stretch occupies residues 122–253; it reads EIEKFNRRLV…KRAIELINNY (132 aa). Glu158 is a DNA binding site. Positions 231 and 233 each coordinate DNA. Asp233 serves as a coordination point for Mg(2+). Positions 336-344 are interaction with PCNA; sequence TQVRLDSFF. Residues 351–386 form a disordered region; the sequence is PNAVHAAKRKAEEAKKSANNKKAKTSGGAARGRRPK.

The protein belongs to the XPG/RAD2 endonuclease family. FEN1 subfamily. As to quaternary structure, interacts with PCNA. Three molecules of FEN1 bind to one PCNA trimer with each molecule binding to one PCNA monomer. PCNA stimulates the nuclease activity without altering cleavage specificity. The cofactor is Mg(2+). Post-translationally, phosphorylated. Phosphorylation upon DNA damage induces relocalization to the nuclear plasma.

The protein resides in the nucleus. Its subcellular location is the nucleolus. It localises to the nucleoplasm. The protein localises to the mitochondrion. Structure-specific nuclease with 5'-flap endonuclease and 5'-3' exonuclease activities involved in DNA replication and repair. During DNA replication, cleaves the 5'-overhanging flap structure that is generated by displacement synthesis when DNA polymerase encounters the 5'-end of a downstream Okazaki fragment. It enters the flap from the 5'-end and then tracks to cleave the flap base, leaving a nick for ligation. Also involved in the long patch base excision repair (LP-BER) pathway, by cleaving within the apurinic/apyrimidinic (AP) site-terminated flap. Acts as a genome stabilization factor that prevents flaps from equilibrating into structures that lead to duplications and deletions. Also possesses 5'-3' exonuclease activity on nicked or gapped double-stranded DNA, and exhibits RNase H activity. Also involved in replication and repair of rDNA and in repairing mitochondrial DNA. The protein is Flap endonuclease 1 of Drosophila persimilis (Fruit fly).